We begin with the raw amino-acid sequence, 387 residues long: 1,3-propanediol dehydrogenase (387 aa).

This sequence belongs to the iron-containing alcohol dehydrogenase family. Homooctamer. It depends on Fe cation as a cofactor.

The enzyme catalyses propane-1,3-diol + NAD(+) = 3-hydroxypropanal + NADH + H(+). Its activity is regulated as follows. Inhibited by the metal chelator 1,10-phenanthroline. Its function is as follows. Catalyzes the reduction of 3-hydroxypropanal. Is considerably less active with glyceraldehyde, propionaldehyde, acetaldehyde, and butyraldehyde. Also catalyzes the oxidation of various primary, secondary, and tertiary alcohols. Is most active with substrates containing two primary alcohol groups separated by one or two carbon atoms. 1,3-propanediol is the preferred substrate. In Citrobacter freundii, this protein is 1,3-propanediol dehydrogenase.